Reading from the N-terminus, the 329-residue chain is DNA-directed RNA polymerase subunit alpha (329 aa).

The segment at Met1–Arg235 is alpha N-terminal domain (alpha-NTD). The alpha C-terminal domain (alpha-CTD) stretch occupies residues Phe249 to Asp329.

This sequence belongs to the RNA polymerase alpha chain family. As to quaternary structure, homodimer. The RNAP catalytic core consists of 2 alpha, 1 beta, 1 beta' and 1 omega subunit. When a sigma factor is associated with the core the holoenzyme is formed, which can initiate transcription.

The catalysed reaction is RNA(n) + a ribonucleoside 5'-triphosphate = RNA(n+1) + diphosphate. DNA-dependent RNA polymerase catalyzes the transcription of DNA into RNA using the four ribonucleoside triphosphates as substrates. In Mannheimia succiniciproducens (strain KCTC 0769BP / MBEL55E), this protein is DNA-directed RNA polymerase subunit alpha.